The sequence spans 361 residues: Histidinol-phosphate aminotransferase (361 aa).

Position 224 is an N6-(pyridoxal phosphate)lysine (Lys-224).

Belongs to the class-II pyridoxal-phosphate-dependent aminotransferase family. Histidinol-phosphate aminotransferase subfamily. As to quaternary structure, homodimer. Pyridoxal 5'-phosphate is required as a cofactor.

It catalyses the reaction L-histidinol phosphate + 2-oxoglutarate = 3-(imidazol-4-yl)-2-oxopropyl phosphate + L-glutamate. It participates in amino-acid biosynthesis; L-histidine biosynthesis; L-histidine from 5-phospho-alpha-D-ribose 1-diphosphate: step 7/9. The sequence is that of Histidinol-phosphate aminotransferase from Limosilactobacillus fermentum (strain NBRC 3956 / LMG 18251) (Lactobacillus fermentum).